The primary structure comprises 149 residues: Globin (149 aa).

The region spanning 2-149 (VLTKDEFDSL…KIFTGVAGQL (148 aa)) is the Globin domain. His-100 contacts heme.

It belongs to the globin family. As to quaternary structure, monomer.

Oxygen binding protein. This Isoparorchis hypselobagri (Giant trematode) protein is Globin.